A 190-amino-acid polypeptide reads, in one-letter code: Cypemycin cysteine dehydrogenase (decarboxylating) (190 aa).

Belongs to the HFCD (homooligomeric flavin containing Cys decarboxylase) superfamily.

It carries out the reaction [cypemycin](1-18)-L-Cys-L-Leu-L-Val-L-Cys + A = C(3,19),S(21)-[cypemycin](1-18)-L-Ala-L-Leu-N-thioethenyl-L-valinamide + hydrogen sulfide + AH2 + CO2. Functionally, involved in the biosynthesis of the lanaridin cypemycin. In Streptomyces sp, this protein is Cypemycin cysteine dehydrogenase (decarboxylating).